A 201-amino-acid polypeptide reads, in one-letter code: Recombination protein RecR (201 aa).

A C4-type zinc finger spans residues 60–75 (CKYCQSLTEKDVCDIC). The 95-residue stretch at 83 to 177 (SKLCIIESML…KISRIGFGVP (95 aa)) folds into the Toprim domain.

It belongs to the RecR family.

May play a role in DNA repair. It seems to be involved in an RecBC-independent recombinational process of DNA repair. It may act with RecF and RecO. The sequence is that of Recombination protein RecR from Francisella philomiragia subsp. philomiragia (strain ATCC 25017 / CCUG 19701 / FSC 153 / O#319-036).